The chain runs to 350 residues: Protein RecA (350 aa).

ATP is bound at residue glycine 80–threonine 87.

This sequence belongs to the RecA family.

Its subcellular location is the cytoplasm. Can catalyze the hydrolysis of ATP in the presence of single-stranded DNA, the ATP-dependent uptake of single-stranded DNA by duplex DNA, and the ATP-dependent hybridization of homologous single-stranded DNAs. It interacts with LexA causing its activation and leading to its autocatalytic cleavage. The chain is Protein RecA from Chlorobium limicola (strain DSM 245 / NBRC 103803 / 6330).